The primary structure comprises 459 residues: MLNMSSDQEPPCSPTGTASSMSHVSDSDSDSPLSPAGSEGRGSHRPPGISKRDGEEPMDERFPACIRDAVSQVLKGYDWSLVPMPVRGSGGLKAKPHVKRPMNAFMVWAQAARRKLADQYPHLHNAELSKTLGKLWRLLSENEKRPFVEEAERLRVQHKKDHPDYKYQPRRRKSVKAGQSDSDSGAELGHHPGSQMYKSDSGMGSMGENHLHSEHAGQNHGPPTPPTTPKTDLHHGGKQELKHEGRRMMDNGRQNIDFSNVDINELSSEVISNIEAFDVHEFDQYLPLNGHGAIPADHGQNTTAAPYGPSYPHAAGATPAPVWSHKSSSTSSSSSIESGQQRPHIKTEQLSPSHYNDQSQGSPTHSDYNTYSAQACATTVSSATVPTAFPSSQCDYTDLPSSNYYNPYSGYPSSLYQYPYFHSSRRPYATPILNSLSIPPSHSPTSNWDQPVYTTLTRP.

The segment covering 1-18 (MLNMSSDQEPPCSPTGTA) has biased composition (polar residues). Disordered regions lie at residues 1–57 (MLNM…GEEP), 152–247 (ERLR…EGRR), and 293–367 (AIPA…THSD). The span at 19-34 (SSMSHVSDSDSDSPLS) shows a compositional bias: low complexity. A dimerization (DIM) region spans residues 56 to 96 (EPMDERFPACIRDAVSQVLKGYDWSLVPMPVRGSGGLKAKP). The HMG box DNA-binding region spans 98–166 (VKRPMNAFMV…QHKKDHPDYK (69 aa)). Composition is skewed to basic and acidic residues over residues 152 to 167 (ERLRVQHKKDHPDYKY) and 231 to 247 (TDLHHGGKQELKHEGRR). A transactivation domain (TAM) region spans residues 222–297 (PPTPPTTPKT…LNGHGAIPAD (76 aa)). Residues 324–338 (SHKSSSTSSSSSIES) are compositionally biased toward low complexity. The segment at 342–459 (RPHIKTEQLS…QPVYTTLTRP (118 aa)) is transactivation domain (TAC). Over residues 348 to 367 (EQLSPSHYNDQSQGSPTHSD) the composition is skewed to polar residues. The 9aaTAD signature appears at 413 to 421 (SSLYQYPYF). Residues 439–459 (PPSHSPTSNWDQPVYTTLTRP) are disordered.

As to expression, from gastrula to neural stages, expressed in a ventrolateral domain around the blastopore. A second domain of expression appears at mid-gastrula stage (stage 11.5) lateral to the neural plate, in the presumptive neural crest. At neurula stage (stage 15), also expressed in the prospective cement gland. As development proceeds, expression persists in migrating cranial crest cells as they populate the pharyngeal arches, and in trunk neural crest cells. Not expressed early in the otic placode, with otic expression only beginning around stage 30.

The protein resides in the nucleus. Its function is as follows. Transcription factor. Acts early in neural crest formation, functioning redundantly with the other group E Sox factors sox9 and sox10 to induce neural crest progenitors. Regulates the onset of expression of many neural crest marker genes including sox10, and regulates the development of multiple neural crest derivatives. May be required to regulate neural crest cell migration. This Xenopus laevis (African clawed frog) protein is Transcription factor Sox-8 (sox8).